A 703-amino-acid chain; its full sequence is Probable boron transporter 2 (703 aa).

Over 1-35 (MEETFVPFEGIKNDLKGRLMCYKQDWTGGIKAGFR) the chain is Cytoplasmic. Residues 36–56 (ILAPTTYIFFASAIPVISFGE) form a helical membrane-spanning segment. Residues 57–75 (QLERSTDGVLTAVQTLAST) are Extracellular-facing. The chain crosses the membrane as a helical span at residues 76–96 (AICGIIHSIIGGQPLLILGVA). Residues 97–120 (EPTVIMYTFMFNFAKGRPELGRNL) are Cytoplasmic-facing. Residues 121–141 (FLAWSGWVCVWTSLILFVLAI) traverse the membrane as a helical segment. At 142-155 (CGACSFINRFTRVA) the chain is on the extracellular side. The chain crosses the membrane as a helical span at residues 156–176 (GELFGLLIAMLFMQQAIKGLV). Topologically, residues 177–195 (DEFRAPAREDLKLVEFLPS) are cytoplasmic. A helical membrane pass occupies residues 196–216 (WRFANGMFALVLSFGLLITAL). Over 217–233 (RSRKARSWRYGTGWLRS) the chain is Extracellular. The chain crosses the membrane as a helical span at residues 234–254 (LVADYGVPLMVLVWTGVSYIP). Over 255 to 289 (TGDVPKGIPRRLFSPNPWSPGAYENWTVVKEMLQV) the chain is Cytoplasmic. A helical membrane pass occupies residues 290–310 (PIVYIIGAFIPATMIAVLYYF). The Extracellular portion of the chain corresponds to 311–337 (DHSVASQLAQQKEFNLRKPSSYHYDLL). A helical transmembrane segment spans residues 338–358 (LLGFLTLMCGLLGIPPSNGVI). The Cytoplasmic segment spans residues 359 to 480 (PQSPMHTKSL…AVMVGGCVAA (122 aa)). Residues 481–501 (MPLLKMIPTSVLWGYFAFMAI) traverse the membrane as a helical segment. Residues 502–557 (ESLPGNQFWERILLLFTAPSRRFKVLEDNHATFVETVPFKTIAMFTIFQTTYLLTC) are Extracellular-facing. A helical membrane pass occupies residues 558-578 (FGLTWIPIAGVMFPLLIMFLI). Topologically, residues 579 to 703 (PVRQYILPRF…SPLNPSSSSK (125 aa)) are cytoplasmic. Residues 678 to 703 (EMSPRLSGKGQNSPKPSPLNPSSSSK) are disordered.

Belongs to the anion exchanger (TC 2.A.31.3) family.

The protein localises to the membrane. Functionally, probable boron transporter. Boron is essential for maintaining the integrity of plants cell walls. This is Probable boron transporter 2 (BOR2) from Arabidopsis thaliana (Mouse-ear cress).